We begin with the raw amino-acid sequence, 360 residues long: MLLDKLAFIENKYDELSVKISDPSIMQNQNEWRKLCKEQADLEIIVNAYKEYKQVIEDLQVNKEMLSDESDREMKEMLNEEIASLSQREVELEKEIQILLLPKDPNDDKNVFVEIRGGAGGEEAALFAYNLFRMYTRYAERQRWSTEIMSLNETDIGGFKEVVFMIKGNGAYSKLKYESGVHRVQRVPDTESSGRIHTSTVTVAVLPEVDDVEIEIADKDVRIDVFRASGHGGQCVNTTDSAVRITHLPSGLVVSCQDEKSQLKNKEKAMKVLRSRLFEKAEQERADGIAADRKSQVGTGDRSERIRTYNYPQGRITDHRIGLTLYKLDSFLDGDVQEMINALITADQAEKMQKMGNSEM.

N5-methylglutamine is present on Gln234.

Belongs to the prokaryotic/mitochondrial release factor family. Methylated by PrmC. Methylation increases the termination efficiency of RF1.

It is found in the cytoplasm. Functionally, peptide chain release factor 1 directs the termination of translation in response to the peptide chain termination codons UAG and UAA. The polypeptide is Peptide chain release factor 1 (Clostridium botulinum (strain Eklund 17B / Type B)).